Consider the following 264-residue polypeptide: Thymidylate synthase (264 aa).

DUMP is bound by residues Arg21 and 126–127; that span reads RR. Cys146 serves as the catalytic Nucleophile. DUMP contacts are provided by residues 166 to 169, Asn177, and 207 to 209; these read RSAD and HLY. Position 169 (Asp169) interacts with (6R)-5,10-methylene-5,6,7,8-tetrahydrofolate. Ala263 serves as a coordination point for (6R)-5,10-methylene-5,6,7,8-tetrahydrofolate.

This sequence belongs to the thymidylate synthase family. Bacterial-type ThyA subfamily. In terms of assembly, homodimer.

The protein localises to the cytoplasm. The catalysed reaction is dUMP + (6R)-5,10-methylene-5,6,7,8-tetrahydrofolate = 7,8-dihydrofolate + dTMP. Its pathway is pyrimidine metabolism; dTTP biosynthesis. Its function is as follows. Catalyzes the reductive methylation of 2'-deoxyuridine-5'-monophosphate (dUMP) to 2'-deoxythymidine-5'-monophosphate (dTMP) while utilizing 5,10-methylenetetrahydrofolate (mTHF) as the methyl donor and reductant in the reaction, yielding dihydrofolate (DHF) as a by-product. This enzymatic reaction provides an intracellular de novo source of dTMP, an essential precursor for DNA biosynthesis. This Rhodopseudomonas palustris (strain HaA2) protein is Thymidylate synthase.